We begin with the raw amino-acid sequence, 692 residues long: Vacuolar amino acid transporter 3 (692 aa).

The span at 1 to 14 shows a compositional bias: polar residues; it reads MNGKEVSSGSGRTQ. Residues 1–71 form a disordered region; it reads MNGKEVSSGS…TGGLLKKPPL (71 aa). The segment covering 15-24 has biased composition (low complexity); sequence SNNNKKNNNG. A compositionally biased stretch (polar residues) spans 28 to 38; the sequence is GISHASGSPLT. Residues Ser-59, Ser-119, and Ser-121 each carry the phosphoserine modification. Disordered regions lie at residues 135 to 170 and 258 to 294; these read KWTN…SNRK and DLSE…GRHP. Over residues 141 to 153 the composition is skewed to low complexity; the sequence is PSSPSQYQYPSQP. Residues 154 to 167 show a composition bias toward polar residues; sequence ALSTSIPSQAPSFS. Position 165 is a phosphoserine (Ser-165). Residues 258–279 show a composition bias toward acidic residues; sequence DLSEEEEEEEETEEEPEEEALE. A run of 11 helical transmembrane segments spans residues 302–322, 329–349, 374–394, 412–432, 443–463, 483–503, 519–539, 561–581, 607–627, 630–650, and 665–685; these read AVLL…PKAF, FSAL…VSLI, FAIL…YTVF, GSIS…PLSL, ALIA…YSIY, WSLF…LIPI, AVMC…YAAF, VQLL…FPAI, YFRC…ANDL, FVSL…PPLL, and LLLD…TSWQ.

It belongs to the amino acid/polyamine transporter 2 family.

The protein localises to the vacuole membrane. Involved in amino acid efflux from the vacuole to the cytoplasm. Capable of transporting large neutral amino acids including tyrosine, glutamine, asparagine, isoleucine and leucine. This chain is Vacuolar amino acid transporter 3 (AVT3), found in Saccharomyces cerevisiae (strain ATCC 204508 / S288c) (Baker's yeast).